Consider the following 81-residue polypeptide: Conotoxin Im6.1 (81 aa).

Positions 1 to 20 (MSKLGVVLFTLLLLVPLVTP) are cleaved as a signal peptide. A propeptide spanning residues 21–47 (ERDGGKWTMLAKNKKAMKRNLMDFITR) is cleaved from the precursor. Cystine bridges form between cysteine 49–cysteine 61, cysteine 54–cysteine 67, and cysteine 60–cysteine 76.

Belongs to the conotoxin M superfamily. As to expression, expressed by the venom duct.

The protein resides in the secreted. The chain is Conotoxin Im6.1 from Conus imperialis (Imperial cone).